Here is a 1151-residue protein sequence, read N- to C-terminus: Importin beta (1151 aa).

HEAT repeat units follow at residues M1–E36, P37–N82, P83–F132, P133–G175, G176–I222, P223–K269, P270–K316, A317–F377, P378–K416, E417–A453, P454–K495, A496–D540, F541–L593, P594–F642, P643–T704, P705–S756, P757–E811, T812–D880, L881–S932, P933–D978, P979–F1027, P1028–D1074, P1075–Q1120, and I1121–Q1151.

This sequence belongs to the importin beta family.

It is found in the nucleus intermembrane space. Its subcellular location is the cytoplasm. It localises to the nucleus. In terms of biological role, functions in nuclear protein import as nuclear transport receptor. Involved in encystation process. Constitutive expression enhances cyst production and increases transcription of endogenous genes involved in encystation. Level of mRNA of the transcriptional factor myb1-like protein increases in early stages of the encystation process followed by increased mRNAs of the cyst wall proteins cwp1-3. The sequence is that of Importin beta from Giardia intestinalis (strain ATCC 50803 / WB clone C6) (Giardia lamblia).